A 141-amino-acid chain; its full sequence is Large ribosomal subunit protein uL11A (141 aa).

This sequence belongs to the universal ribosomal protein uL11 family. Part of the ribosomal stalk of the 50S ribosomal subunit. Interacts with L10 and the large rRNA to form the base of the stalk. L10 forms an elongated spine to which L12 dimers bind in a sequential fashion forming a multimeric L10(L12)X complex. In terms of processing, one or more lysine residues are methylated.

Its function is as follows. Forms part of the ribosomal stalk which helps the ribosome interact with GTP-bound translation factors. The chain is Large ribosomal subunit protein uL11A from Halalkalibacterium halodurans (strain ATCC BAA-125 / DSM 18197 / FERM 7344 / JCM 9153 / C-125) (Bacillus halodurans).